Reading from the N-terminus, the 218-residue chain is Octanoyltransferase (218 aa).

The region spanning 31 to 206 is the BPL/LPL catalytic domain; the sequence is EETPDEVWLV…ELVNLLGYEQ (176 aa). Residues 70 to 77, 137 to 139, and 150 to 152 each bind substrate; these read RGGQVTYH, SLG, and GLA. Cysteine 168 (acyl-thioester intermediate) is an active-site residue.

Belongs to the LipB family.

Its subcellular location is the cytoplasm. It catalyses the reaction octanoyl-[ACP] + L-lysyl-[protein] = N(6)-octanoyl-L-lysyl-[protein] + holo-[ACP] + H(+). The protein operates within protein modification; protein lipoylation via endogenous pathway; protein N(6)-(lipoyl)lysine from octanoyl-[acyl-carrier-protein]: step 1/2. Functionally, catalyzes the transfer of endogenously produced octanoic acid from octanoyl-acyl-carrier-protein onto the lipoyl domains of lipoate-dependent enzymes. Lipoyl-ACP can also act as a substrate although octanoyl-ACP is likely to be the physiological substrate. In Vibrio vulnificus (strain CMCP6), this protein is Octanoyltransferase.